A 338-amino-acid polypeptide reads, in one-letter code: Cytoskeleton protein RodZ (338 aa).

Topologically, residues 1–111 are cytoplasmic; sequence MNTEASQDQT…LGKKHKKRDG (111 aa). In terms of domain architecture, HTH cro/C1-type spans 19 to 79; that stretch reads LRQAREALGL…KLVHLPEDEL (61 aa). A DNA-binding region (H-T-H motif) is located at residues 30–49; it reads QQMVAERLCLKVSTIRDIEE. The chain crosses the membrane as a helical; Signal-anchor for type II membrane protein span at residues 112–132; sequence WLMSFTWLIVLVVLGLTGAWW. Residues 133-338 lie on the Periplasmic side of the membrane; sequence WQNHQAQQAE…RVARLTVGVE (206 aa). Polar residues-rich tracts occupy residues 151–163 and 180–195; these read SAQLSQNGGQSVP and PVANSQPSTPTENGTV. The segment at 151–253 is disordered; sequence SAQLSQNGGQ…LPTADAGVTG (103 aa). Low complexity predominate over residues 196 to 209; the sequence is PATSSAAPADTANN. Polar residues predominate over residues 210-241; it reads GVNTTAPQGTTSAESAVVSPSQAPLPSVSTAQ.

Belongs to the RodZ family.

It localises to the cell inner membrane. Cytoskeletal protein that is involved in cell-shape control through regulation of the length of the long axis. The polypeptide is Cytoskeleton protein RodZ (Yersinia enterocolitica serotype O:8 / biotype 1B (strain NCTC 13174 / 8081)).